A 377-amino-acid polypeptide reads, in one-letter code: Nitric oxide reductase FlRd-NAD(+) reductase (377 aa).

The protein belongs to the FAD-dependent oxidoreductase family. Requires FAD as cofactor.

Its subcellular location is the cytoplasm. The catalysed reaction is 2 reduced [nitric oxide reductase rubredoxin domain] + NAD(+) + H(+) = 2 oxidized [nitric oxide reductase rubredoxin domain] + NADH. It participates in nitrogen metabolism; nitric oxide reduction. In terms of biological role, one of at least two accessory proteins for anaerobic nitric oxide (NO) reductase. Reduces the rubredoxin moiety of NO reductase. This is Nitric oxide reductase FlRd-NAD(+) reductase from Shigella dysenteriae serotype 1 (strain Sd197).